A 562-amino-acid chain; its full sequence is DNA-binding protein MutS2 (562 aa).

380–387 (GANSGGKT) serves as a coordination point for ATP.

It belongs to the DNA mismatch repair MutS family. Archaeal Muts2 subfamily. In terms of assembly, multimer. Co(2+) serves as cofactor. Mn(2+) is required as a cofactor.

In terms of biological role, has ATPase and non-specific DNA-binding activities. May be involved in recombination and/or recombinational repair. Not involved in mismatch repair. The protein is DNA-binding protein MutS2 of Pyrococcus furiosus (strain ATCC 43587 / DSM 3638 / JCM 8422 / Vc1).